The primary structure comprises 114 residues: Large ribosomal subunit protein P2 (114 aa).

Positions 84 to 114 (TDALQAGSKKGETKEGPKEESDEDMGFGLFD) are disordered. The segment covering 92-102 (KKGETKEGPKE) has biased composition (basic and acidic residues).

This sequence belongs to the eukaryotic ribosomal protein P1/P2 family. In terms of assembly, P1 and P2 exist as dimers at the large ribosomal subunit. Post-translationally, phosphorylated.

Its function is as follows. Plays an important role in the elongation step of protein synthesis. This chain is Large ribosomal subunit protein P2 (rpp-2), found in Brugia malayi (Filarial nematode worm).